Consider the following 543-residue polypeptide: uncharacterized protein (543 aa).

The TRAM domain occupies 1 to 59; sequence MLKKNDIVEVEIVDLTHEGAGVAKVDGLVFFVENALPSEKILMRVLKVNKKIGFGKVEK. S-adenosyl-L-methionine contacts are provided by Gln283, Tyr312, Glu333, and Asp381. The active-site Nucleophile is the Cys408.

It belongs to the class I-like SAM-binding methyltransferase superfamily. RNA M5U methyltransferase family.

This is an uncharacterized protein from Streptococcus pneumoniae (strain ATCC BAA-255 / R6).